Reading from the N-terminus, the 466-residue chain is Methylenetetrahydrofolate--tRNA-(uracil-5-)-methyltransferase TrmFO (466 aa).

14–19 (GGGLAG) lines the FAD pocket.

It belongs to the MnmG family. TrmFO subfamily. The cofactor is FAD.

It is found in the cytoplasm. The catalysed reaction is uridine(54) in tRNA + (6R)-5,10-methylene-5,6,7,8-tetrahydrofolate + NADH + H(+) = 5-methyluridine(54) in tRNA + (6S)-5,6,7,8-tetrahydrofolate + NAD(+). It carries out the reaction uridine(54) in tRNA + (6R)-5,10-methylene-5,6,7,8-tetrahydrofolate + NADPH + H(+) = 5-methyluridine(54) in tRNA + (6S)-5,6,7,8-tetrahydrofolate + NADP(+). Its function is as follows. Catalyzes the folate-dependent formation of 5-methyl-uridine at position 54 (M-5-U54) in all tRNAs. This Brucella suis (strain ATCC 23445 / NCTC 10510) protein is Methylenetetrahydrofolate--tRNA-(uracil-5-)-methyltransferase TrmFO.